The chain runs to 183 residues: uncharacterized protein (183 aa).

Positions 136-183 (EPPASVPSKQSGRSDKKKSTRKSPTFRNRPDFRKNKGRQLNKTTKQKK) are disordered. Basic residues predominate over residues 170–183 (NKGRQLNKTTKQKK).

This is an uncharacterized protein from Homo sapiens (Human).